The sequence spans 367 residues: MGSNSFGRLFTVTTFGESHGPAIGCVIDGCPPGLEIAPEEFTHDLQRRATGKSRHTSARREADEIEILSGVYEGRTTGTPIGLLIRNTDQRSKDYTNIAQQFRPGHADYTYWQKYGIRDPRGGGRSSARETTMRVAAGVIAKKWLKQRYGVLVRGFLSQLGEIRPSGFDWDAVEDNPFFWPHAAQVPELETYMDALRKSGDSVGARVDVVAGGVPPGWGEPIYGKLDSELAAALMSINAVKGVEIGDGFASAAQKGTEHRDLITPEGFLSNHAGGILGGISTGQAVTASMVLKPTSSLRLPGATVDADGAVVDVITTGRHDPCVGIRATPIAEAMMALVLMDQALRHRAQCGDVGEVSPLIPGQADV.

The NADP(+) site is built by Arg-48 and Arg-54. FMN is bound by residues 125–127 (RSS), 238–239 (NA), Gly-278, 293–297 (KPTSS), and Arg-319.

The protein belongs to the chorismate synthase family. As to quaternary structure, homotetramer. FMNH2 serves as cofactor.

It catalyses the reaction 5-O-(1-carboxyvinyl)-3-phosphoshikimate = chorismate + phosphate. The protein operates within metabolic intermediate biosynthesis; chorismate biosynthesis; chorismate from D-erythrose 4-phosphate and phosphoenolpyruvate: step 7/7. Functionally, catalyzes the anti-1,4-elimination of the C-3 phosphate and the C-6 proR hydrogen from 5-enolpyruvylshikimate-3-phosphate (EPSP) to yield chorismate, which is the branch point compound that serves as the starting substrate for the three terminal pathways of aromatic amino acid biosynthesis. This reaction introduces a second double bond into the aromatic ring system. This chain is Chorismate synthase, found in Xanthomonas campestris pv. campestris (strain 8004).